Here is a 138-residue protein sequence, read N- to C-terminus: Small ribosomal subunit protein uS8 (138 aa).

It belongs to the universal ribosomal protein uS8 family. Part of the 30S ribosomal subunit. Contacts proteins S5 and S12.

One of the primary rRNA binding proteins, it binds directly to 16S rRNA central domain where it helps coordinate assembly of the platform of the 30S subunit. The sequence is that of Small ribosomal subunit protein uS8 (rpsH) from Thermus thermophilus (strain ATCC BAA-163 / DSM 7039 / HB27).